A 409-amino-acid polypeptide reads, in one-letter code: MRIYKVGGAVRDRLLGRPVTDIDWVVVGASAEEMLAKGFRPVGADFPVFLHPKSGEEYALARTERKSGRGYSGFTFHASPEVTLEEDLIRRDLTINAMAEDEQGRLTDPYNGQKDLEERLLRHVSPAFAEDPLRVLRVARFAARYAGLGFRVAPETLELMRELSESGELQALTAERSWKEISRALMEDQPQVFIQVLRDCGALAVLMPEIDALFGVPQPAVHHPEIDTGAHTLSVLLQAALHQQPLSVRWACLLHDLGKGLTPEEEWPRHIGHERTGLELIKAVNERFKAPRECQELALLVGQYHTHGHKALELKASTLLELLQSFDVFRRPQRFEEFIAACEMDARGRLGLESRPYPQADYLRGAAEAARKVAVQPLLEQGFKGPQLGEALRLERLKAIKAYKEQHAP.

Gly-8 and Arg-11 together coordinate ATP. The CTP site is built by Gly-8 and Arg-11. Mg(2+) is bound by residues Asp-21 and Asp-23. Arg-91, Arg-137, and Arg-140 together coordinate ATP. CTP is bound by residues Arg-91, Arg-137, and Arg-140. Residues 228 to 329 enclose the HD domain; the sequence is TGAHTLSVLL…LELLQSFDVF (102 aa).

The protein belongs to the tRNA nucleotidyltransferase/poly(A) polymerase family. Bacterial CCA-adding enzyme type 1 subfamily. Monomer. Can also form homodimers and oligomers. It depends on Mg(2+) as a cofactor. The cofactor is Ni(2+).

It carries out the reaction a tRNA precursor + 2 CTP + ATP = a tRNA with a 3' CCA end + 3 diphosphate. It catalyses the reaction a tRNA with a 3' CCA end + 2 CTP + ATP = a tRNA with a 3' CCACCA end + 3 diphosphate. Functionally, catalyzes the addition and repair of the essential 3'-terminal CCA sequence in tRNAs without using a nucleic acid template. Adds these three nucleotides in the order of C, C, and A to the tRNA nucleotide-73, using CTP and ATP as substrates and producing inorganic pyrophosphate. tRNA 3'-terminal CCA addition is required both for tRNA processing and repair. Also involved in tRNA surveillance by mediating tandem CCA addition to generate a CCACCA at the 3' terminus of unstable tRNAs. While stable tRNAs receive only 3'-terminal CCA, unstable tRNAs are marked with CCACCA and rapidly degraded. This is Multifunctional CCA protein from Pseudomonas fluorescens (strain ATCC BAA-477 / NRRL B-23932 / Pf-5).